Consider the following 196-residue polypeptide: Large ribosomal subunit protein uL18 (196 aa).

This sequence belongs to the universal ribosomal protein uL18 family. In terms of assembly, part of the 50S ribosomal subunit. Contacts the 5S and 23S rRNAs.

In terms of biological role, this is one of the proteins that bind and probably mediate the attachment of the 5S RNA into the large ribosomal subunit, where it forms part of the central protuberance. The chain is Large ribosomal subunit protein uL18 from Sulfurisphaera tokodaii (strain DSM 16993 / JCM 10545 / NBRC 100140 / 7) (Sulfolobus tokodaii).